Reading from the N-terminus, the 450-residue chain is Serine/threonine-protein kinase SSN3 (450 aa).

The Protein kinase domain maps to 40-393; the sequence is YRIIGFISSG…AAQALQSPFF (354 aa). ATP-binding positions include 46-54 and Lys-71; that span reads ISSGTYGRV. Catalysis depends on Asp-173, which acts as the Proton acceptor. 2 disordered regions span residues 307-341 and 418-450; these read ASSH…NLEK and QDDN…RQKE. Residues 310–326 show a composition bias toward basic residues; sequence HHNHHSHHHPHHHHGHY.

It belongs to the protein kinase superfamily. CMGC Ser/Thr protein kinase family. CDC2/CDKX subfamily. Component of the SRB8-11 complex, a regulatory module of the Mediator complex. Interacts with SSN8/FCC1. Mg(2+) serves as cofactor.

The protein localises to the nucleus. It catalyses the reaction L-seryl-[protein] + ATP = O-phospho-L-seryl-[protein] + ADP + H(+). The catalysed reaction is L-threonyl-[protein] + ATP = O-phospho-L-threonyl-[protein] + ADP + H(+). The enzyme catalyses [DNA-directed RNA polymerase] + ATP = phospho-[DNA-directed RNA polymerase] + ADP + H(+). Component of the SRB8-11 complex. The SRB8-11 complex is a regulatory module of the Mediator complex which is itself involved in regulation of basal and activated RNA polymerase II-dependent transcription. The SRB8-11 complex may be involved in the transcriptional repression of a subset of genes regulated by Mediator. It may inhibit the association of the Mediator complex with RNA polymerase II to form the holoenzyme complex. The SRB8-11 complex phosphorylates the C-terminal domain (CTD) of the largest subunit of RNA polymerase II. Required for normal growth and secondary metabolism. This Gibberella moniliformis (Maize ear and stalk rot fungus) protein is Serine/threonine-protein kinase SSN3 (SSN3).